Reading from the N-terminus, the 433-residue chain is Pyrimidine-nucleoside phosphorylase (433 aa).

81 to 83 (KHS) serves as a coordination point for phosphate. K(+)-binding residues include glycine 88 and threonine 90. Residues threonine 92, 108 to 110 (KMS), and threonine 120 each bind phosphate. Residues arginine 168 and lysine 187 each coordinate substrate. Residues leucine 243, alanine 246, and glutamate 255 each coordinate K(+).

The protein belongs to the thymidine/pyrimidine-nucleoside phosphorylase family. In terms of assembly, homodimer. K(+) serves as cofactor.

It catalyses the reaction uridine + phosphate = alpha-D-ribose 1-phosphate + uracil. The enzyme catalyses thymidine + phosphate = 2-deoxy-alpha-D-ribose 1-phosphate + thymine. It carries out the reaction 2'-deoxyuridine + phosphate = 2-deoxy-alpha-D-ribose 1-phosphate + uracil. Functionally, catalyzes phosphorolysis of the pyrimidine nucleosides uridine, thymidine and 2'-deoxyuridine with the formation of the corresponding pyrimidine base and ribose-1-phosphate. In Staphylococcus epidermidis (strain ATCC 12228 / FDA PCI 1200), this protein is Pyrimidine-nucleoside phosphorylase (pdp).